We begin with the raw amino-acid sequence, 111 residues long: Small ribosomal subunit protein bS6 (111 aa).

The protein belongs to the bacterial ribosomal protein bS6 family.

Functionally, binds together with bS18 to 16S ribosomal RNA. In Francisella tularensis subsp. tularensis (strain FSC 198), this protein is Small ribosomal subunit protein bS6.